Reading from the N-terminus, the 479-residue chain is Cardiolipin synthase A (479 aa).

The next 2 helical transmembrane spans lie at 8–28 (IFGY…IHAV) and 38–58 (IAWA…YLVF). 2 consecutive PLD phosphodiesterase domains span residues 218 to 245 (VNFR…GDEY) and 392 to 419 (QPGF…DNRS). Residues His-223, Lys-225, Asp-230, His-397, Lys-399, and Asp-404 contribute to the active site.

The protein belongs to the phospholipase D family. Cardiolipin synthase subfamily. ClsA sub-subfamily.

The protein localises to the cell inner membrane. It catalyses the reaction 2 a 1,2-diacyl-sn-glycero-3-phospho-(1'-sn-glycerol) = a cardiolipin + glycerol. In terms of biological role, catalyzes the reversible phosphatidyl group transfer from one phosphatidylglycerol molecule to another to form cardiolipin (CL) (diphosphatidylglycerol) and glycerol. The sequence is that of Cardiolipin synthase A from Pseudomonas fluorescens (strain ATCC BAA-477 / NRRL B-23932 / Pf-5).